The primary structure comprises 248 residues: Probable transcriptional regulatory protein Msil_2305 (248 aa).

This sequence belongs to the TACO1 family.

Its subcellular location is the cytoplasm. This Methylocella silvestris (strain DSM 15510 / CIP 108128 / LMG 27833 / NCIMB 13906 / BL2) protein is Probable transcriptional regulatory protein Msil_2305.